Here is a 143-residue protein sequence, read N- to C-terminus: MKLNTKYHGCIEYEEKDVIYFQKGIPGFEELNKFIIFPVEDNEVFLVFHSIENEDIGIIVTSPFNIENNYEIQLEEEQITNLKLQDEKDALVLNTVTLDSDIDKITVNLRAPIIINIKEKIGEQIIINSDKYKVKHSLFKEEA.

It belongs to the FliW family. Interacts with translational regulator CsrA and flagellin(s).

Its subcellular location is the cytoplasm. Its function is as follows. Acts as an anti-CsrA protein, binds CsrA and prevents it from repressing translation of its target genes, one of which is flagellin. Binds to flagellin and participates in the assembly of the flagellum. In Clostridium botulinum (strain ATCC 19397 / Type A), this protein is Flagellar assembly factor FliW.